A 56-amino-acid polypeptide reads, in one-letter code: LLFPLSALPLDGDQPADQPAERMQDISPEQNFWFDLVERGCCTIWNCVQLPGCPCC.

The signal sequence occupies residues leucine 1 to leucine 8. Positions leucine 1–arginine 22 are disordered. The propeptide occupies proline 9 to glycine 40. Disulfide bonds link cysteine 41–cysteine 55, cysteine 42–cysteine 53, and cysteine 47–cysteine 56.

The protein belongs to the conotoxin M superfamily. As to expression, expressed by the venom duct.

It is found in the secreted. In Conus regius (Crown cone), this protein is Conotoxin reg3.9.